The sequence spans 257 residues: Global transcriptional regulator CodY (257 aa).

The interval 1–155 is GAF domain; it reads MSLLSKTREL…AATVIGMEIL (155 aa). Positions 203–222 form a DNA-binding region, H-T-H motif; sequence ASKVADRVGITRSVIVNALR.

Belongs to the CodY family.

It is found in the cytoplasm. DNA-binding global transcriptional regulator which is involved in the adaptive response to starvation and acts by directly or indirectly controlling the expression of numerous genes in response to nutrient availability. During rapid exponential growth, CodY is highly active and represses genes whose products allow adaptation to nutrient depletion. In Staphylococcus saprophyticus subsp. saprophyticus (strain ATCC 15305 / DSM 20229 / NCIMB 8711 / NCTC 7292 / S-41), this protein is Global transcriptional regulator CodY.